The following is a 524-amino-acid chain: Magnesium/proton exchanger 2 (524 aa).

11 helical membrane-spanning segments follow: residues 28–48 (GVRAFIYTVVLAYCFIGLSAI), 88–108 (IADVALLAFGTSFPQISLATI), 125–145 (GTLVGSAAFDLFPIHAVCVVM), 157–177 (LGVWLVELFWSFWAYIWLYII), 185–205 (VITLWEALLTVLQYGLLLLHA), 325–345 (VIGISWNLIIAPWKMLFAFIP), 349–369 (IAHGWIAFICSLIFISGIAYG), 377–397 (ISCVTGVSPYVIAFTALAAGT), 430–450 (IYVGIGVPWLVDTMYNYLFVY), 462–482 (LSFSLLVFFATSFGCITVLVL), and 496–516 (MWAWATSVYFMILWVVFVVLS).

The protein belongs to the Ca(2+):cation antiporter (CaCA) (TC 2.A.19) family. MHX subfamily.

It localises to the vacuole membrane. Its function is as follows. Vacuolar transporter that exchanges protons with Mg(2+), Zn(2+) and Fe(2+) ions. May control the partitioning of Mg(2+) and Zn(2+) between plant organs. This chain is Magnesium/proton exchanger 2 (MHX2), found in Oryza sativa subsp. japonica (Rice).